The chain runs to 568 residues: Potassium-transporting ATPase potassium-binding subunit (568 aa).

12 helical membrane passes run 7–27, 67–87, 137–157, 180–200, 258–278, 288–308, 332–352, 361–381, 384–404, 421–441, 488–508, and 535–555; these read LLITSFLLILMLLAKPLGNII, YALAITIFNLTGLLLLFTLLV, GLTVQNFLSAATGIAVAFALI, LYLLLPLSMVIALVFVSQGVI, FIQILSIFLIPCALCFAFGQV, LLWAMSIIFVIATVGVMYAEL, FGILATSIYAVVTTAASCGAV, ALGGMIPMWLIQIGEVVFGGV, GLYGMLLFVLLTVFIAGLMIG, MVALAILVTPTLALLGTALTI, LLLAIILFLGRFGMILPVLAI, and LLILTIMLIGALTFIPALILG.

Belongs to the KdpA family. The system is composed of three essential subunits: KdpA, KdpB and KdpC.

The protein localises to the cell inner membrane. Functionally, part of the high-affinity ATP-driven potassium transport (or Kdp) system, which catalyzes the hydrolysis of ATP coupled with the electrogenic transport of potassium into the cytoplasm. This subunit binds the periplasmic potassium ions and delivers the ions to the membrane domain of KdpB through an intramembrane tunnel. In Photorhabdus laumondii subsp. laumondii (strain DSM 15139 / CIP 105565 / TT01) (Photorhabdus luminescens subsp. laumondii), this protein is Potassium-transporting ATPase potassium-binding subunit.